The following is a 119-amino-acid chain: Large ribosomal subunit protein bL20 (119 aa).

It belongs to the bacterial ribosomal protein bL20 family.

In terms of biological role, binds directly to 23S ribosomal RNA and is necessary for the in vitro assembly process of the 50S ribosomal subunit. It is not involved in the protein synthesizing functions of that subunit. The chain is Large ribosomal subunit protein bL20 from Clostridium tetani (strain Massachusetts / E88).